Consider the following 275-residue polypeptide: 4-diphosphocytidyl-2-C-methyl-D-erythritol kinase (275 aa).

K8 is an active-site residue. An ATP-binding site is contributed by 86-96 (PEGAGLGGGSS). Residue D125 is part of the active site.

This sequence belongs to the GHMP kinase family. IspE subfamily.

The enzyme catalyses 4-CDP-2-C-methyl-D-erythritol + ATP = 4-CDP-2-C-methyl-D-erythritol 2-phosphate + ADP + H(+). Its pathway is isoprenoid biosynthesis; isopentenyl diphosphate biosynthesis via DXP pathway; isopentenyl diphosphate from 1-deoxy-D-xylulose 5-phosphate: step 3/6. Catalyzes the phosphorylation of the position 2 hydroxy group of 4-diphosphocytidyl-2C-methyl-D-erythritol. The chain is 4-diphosphocytidyl-2-C-methyl-D-erythritol kinase from Thermus thermophilus (strain ATCC BAA-163 / DSM 7039 / HB27).